The sequence spans 942 residues: Inter-alpha-trypsin inhibitor heavy chain H5 (942 aa).

The signal sequence occupies residues 1–16 (MLLLLGLCLGLSLCVG). The VIT domain maps to 35–161 (VPRQVRLLQR…KAAFFLSYEE (127 aa)). 2 N-linked (GlcNAc...) asparagine glycosylation sites follow: asparagine 97 and asparagine 127. 2 disordered regions span residues 116–136 (KKSGDRVKEKRNKTTEENGEK) and 208–227 (SRQRGSGRGEDDSGPPPSTV). N-linked (GlcNAc...) asparagine glycans are attached at residues asparagine 231, asparagine 421, and asparagine 508. The region spanning 295-478 (NVVFVLDSSA…SQLIGFYDEI (184 aa)) is the VWFA domain. Residues 550–571 (QKAGKDVTGSPRPGGDGEGDTN) are disordered. Asparagine 776, asparagine 795, and asparagine 862 each carry an N-linked (GlcNAc...) asparagine glycan.

The protein belongs to the ITIH family. Abundantly expressed in placenta. Less abundant expression in mammary gland and ovary. Expression is barely detectable levels in all other tissues tested.

It is found in the secreted. Its function is as follows. May act as a tumor suppressor. The polypeptide is Inter-alpha-trypsin inhibitor heavy chain H5 (ITIH5) (Homo sapiens (Human)).